The primary structure comprises 200 residues: Cysteine dioxygenase type 1 (200 aa).

Residues histidine 86, histidine 88, and histidine 140 each coordinate Fe cation. A cross-link (3'-(S-cysteinyl)-tyrosine (Cys-Tyr)) is located at residues 93–157 (CFLKMLQGNL…TEPAVSLHLY (65 aa)).

It belongs to the cysteine dioxygenase family. Monomer. The cofactor is Fe cation. It depends on Ni(2+) as a cofactor. Zn(2+) is required as a cofactor. In terms of processing, the thioether cross-link between Cys-93 and Tyr-157 plays a structural role through stabilizing the Fe(2+) ion, and prevents the production of highly damaging free hydroxyl radicals by holding the oxygen radical via hydroxyl hydrogen.

The enzyme catalyses L-cysteine + O2 = 3-sulfino-L-alanine + H(+). It participates in organosulfur biosynthesis; taurine biosynthesis; hypotaurine from L-cysteine: step 1/2. Catalyzes the oxidation of cysteine to cysteine sulfinic acid with addition of molecular dioxygen. The protein is Cysteine dioxygenase type 1 (CDO1) of Bos taurus (Bovine).